Consider the following 436-residue polypeptide: Histidine--tRNA ligase (436 aa).

The protein belongs to the class-II aminoacyl-tRNA synthetase family. In terms of assembly, homodimer.

It is found in the cytoplasm. The enzyme catalyses tRNA(His) + L-histidine + ATP = L-histidyl-tRNA(His) + AMP + diphosphate + H(+). The sequence is that of Histidine--tRNA ligase from Prochlorococcus marinus (strain MIT 9303).